A 466-amino-acid chain; its full sequence is FBD-associated F-box protein At5g22730 (466 aa).

An F-box domain is found at 27-80 (EDLISKLPDSLITQILLYLPIKDIVRTSSLSSRWKSLWLLIPRLDLDSEEFQDY). One can recognise an FBD domain in the interval 385–436 (DEPIIFSSVPRCLVSSLESVEIKKFNGRPAKMEVARYFLENSGVLQKLVLHL).

This is FBD-associated F-box protein At5g22730 from Arabidopsis thaliana (Mouse-ear cress).